The following is a 620-amino-acid chain: MSDTDADADTDAVSTTETSMNADANANADGDTLRTPIVAVLGHVDHGKTTLLDTVRGSAVSEDEAGAITQHIGATAVPLETVSEMAGELVDPADFDLPGLLFIDTPGHHSFTTLRSRGGALADIAVVVVDVNDGFQPQTIEALDILQRTGTPFVVAANKVDTTPGWTPTDGSPIQPTYESQPSAARDRLDERLYELIGDLSDEGFSGDLYWRVQNFTKNVGVVPLSAITSEGVPDLLAVLMGLSQRYMREQMAIDITGPGAGTILEVKDERGFGATVDVVLYDGSVRPDDIIVVGGTDGPIVTDVRALLQPRPNAEIRTENRFDRVEIAQAAAGVKIAAPDLDNAMAGAPLRVVRNRDRANVVSEVEAELADIAVETAEEGVVVKADTLGSLEAMANALKEADVPILRAEVGDVAPRDIAIASTANEERNQTVLGFSVDVLSNASDELEESNVRLFTDDVIYQLVDEYKSYVDEQERAQQETVLDKIVRPCRFRILEDHVFRQSSPAVVGVEVLSGTLKNNQYIIKWNGNEPARIGELSGIQEQGEDVSSARAGTRVSIAIDGPTVGRQIEEGDELWVELPEKHAKILEQELIDEIPADELEALTSYLDSHRKRDPFWGK.

Residues 1 to 10 show a composition bias toward acidic residues; that stretch reads MSDTDADADT. The disordered stretch occupies residues 1–29; the sequence is MSDTDADADTDAVSTTETSMNADANANAD. Low complexity predominate over residues 11–29; that stretch reads DAVSTTETSMNADANANAD. The region spanning 33–248 is the tr-type G domain; it reads LRTPIVAVLG…VLMGLSQRYM (216 aa). Residues 42-49 form a G1 region; it reads GHVDHGKT. Residue 42–49 participates in GTP binding; sequence GHVDHGKT. The tract at residues 67–71 is G2; sequence AITQH. Residues 104–107 form a G3 region; sequence DTPG. Residues 104 to 108 and 158 to 161 each bind GTP; these read DTPGH and NKVD. The tract at residues 158–161 is G4; the sequence is NKVD. Polar residues predominate over residues 162–183; it reads TTPGWTPTDGSPIQPTYESQPS. The tract at residues 162–185 is disordered; the sequence is TTPGWTPTDGSPIQPTYESQPSAA. The segment at 226 to 228 is G5; sequence SAI.

This sequence belongs to the TRAFAC class translation factor GTPase superfamily. Classic translation factor GTPase family. IF-2 subfamily.

Its function is as follows. Function in general translation initiation by promoting the binding of the formylmethionine-tRNA to ribosomes. Seems to function along with eIF-2. The polypeptide is Probable translation initiation factor IF-2 (Haloquadratum walsbyi (strain DSM 16790 / HBSQ001)).